A 353-amino-acid chain; its full sequence is Cyanuric acid amidohydrolase (353 aa).

The segment at 1 to 90 is RU A; the sequence is MSSTALYTVP…NIFVRDERQY (90 aa). Substrate-binding positions include Arg49 and 69–70; that span reads SG. The RU B stretch occupies residues 96 to 231; sequence GLVTAVGRTR…CHILVVAESD (136 aa). Lys145 is an active-site residue. Substrate-binding positions include Arg177 and 214 to 215; that span reads SS. Ser214 acts as the Nucleophile in catalysis. An RU C region spans residues 237 to 353; that stretch reads LRAAHTAMRD…TANATGEASR (117 aa). Mg(2+) is bound at residue Glu275. Substrate-binding positions include Arg302 and 321 to 322; that span reads SG. Mg(2+)-binding residues include Ala324, Gln327, Gly328, Pro329, and Gly332.

This sequence belongs to the cyclic amide hydrolase (CyAH) family. Homotetramer.

It carries out the reaction cyanurate + H2O = 1-carboxybiuret + H(+). The protein operates within xenobiotic degradation; atrazine degradation; biuret from cyanurate: step 1/1. With respect to regulation, inhibited by barbituric acid. In terms of biological role, responsible for the hydrolysis of cyanuric acid, an intermediate formed during catabolism of s-triazine based compounds in herbicides such as atrazine and polymers such as melamine. Catalyzes the hydrolytic opening of the s-triazine ring of cyanuric acid (2,4,6-trihydroxy-s-triazine) to yield carbon dioxide and carboxybiuret, which spontaneously decarboxylates to biuret. Required for growth on melamine or cyanuric acid as sole nitrogen source. The sequence is that of Cyanuric acid amidohydrolase from Rhodococcus sp.